Consider the following 206-residue polypeptide: Phosphoheptose isomerase (206 aa).

Residues 37 to 195 (LVDAFKAGKK…IEQKMDINNE (159 aa)) form the SIS domain. 52-54 (NGG) serves as a coordination point for substrate. Residues histidine 61 and glutamate 65 each contribute to the Zn(2+) site. Substrate is bound by residues glutamate 65, 93–94 (ND), 119–121 (STS), serine 124, and glutamine 172. Positions 172 and 180 each coordinate Zn(2+).

This sequence belongs to the SIS family. GmhA subfamily. In terms of assembly, homotetramer. It depends on Zn(2+) as a cofactor.

It is found in the cytoplasm. It catalyses the reaction 2 D-sedoheptulose 7-phosphate = D-glycero-alpha-D-manno-heptose 7-phosphate + D-glycero-beta-D-manno-heptose 7-phosphate. It functions in the pathway carbohydrate biosynthesis; D-glycero-D-manno-heptose 7-phosphate biosynthesis; D-glycero-alpha-D-manno-heptose 7-phosphate and D-glycero-beta-D-manno-heptose 7-phosphate from sedoheptulose 7-phosphate: step 1/1. In terms of biological role, catalyzes the isomerization of sedoheptulose 7-phosphate in D-glycero-D-manno-heptose 7-phosphate. The sequence is that of Phosphoheptose isomerase from Hamiltonella defensa subsp. Acyrthosiphon pisum (strain 5AT).